A 443-amino-acid chain; its full sequence is Tubulin beta chain (443 aa).

The GTP site is built by Gln11, Glu69, Ser138, Gly142, Thr143, Gly144, Asn204, and Asn226. Position 69 (Glu69) interacts with Mg(2+). The disordered stretch occupies residues Gln424–Asn443. Acidic residues predominate over residues Thr429–Asn443.

It belongs to the tubulin family. As to quaternary structure, dimer of alpha and beta chains. A typical microtubule is a hollow water-filled tube with an outer diameter of 25 nm and an inner diameter of 15 nM. Alpha-beta heterodimers associate head-to-tail to form protofilaments running lengthwise along the microtubule wall with the beta-tubulin subunit facing the microtubule plus end conferring a structural polarity. Microtubules usually have 13 protofilaments but different protofilament numbers can be found in some organisms and specialized cells. Requires Mg(2+) as cofactor.

Its subcellular location is the cytoplasm. It localises to the cytoskeleton. In terms of biological role, tubulin is the major constituent of microtubules, a cylinder consisting of laterally associated linear protofilaments composed of alpha- and beta-tubulin heterodimers. Microtubules grow by the addition of GTP-tubulin dimers to the microtubule end, where a stabilizing cap forms. Below the cap, tubulin dimers are in GDP-bound state, owing to GTPase activity of alpha-tubulin. The protein is Tubulin beta chain (BETA-TT1) of Tetrahymena pyriformis.